The sequence spans 581 residues: Sabinene synthase 1, chloroplastic (581 aa).

The transit peptide at 1–28 (MPLNSLHNLERKPSKAWSTSCTAPAARL) directs the protein to the chloroplast. 5 residues coordinate (2E)-geranyl diphosphate: Arg297, Asp334, Asp338, Arg475, and Asp478. 2 residues coordinate Mg(2+): Asp334 and Asp338. A DDXXD motif motif is present at residues 334–338 (DDVYD). 3 residues coordinate Mg(2+): Asp478, Thr482, and Glu486.

It belongs to the terpene synthase family. Tpsb subfamily. Requires Mg(2+) as cofactor. Mn(2+) serves as cofactor.

It is found in the plastid. The protein localises to the chloroplast. The enzyme catalyses (2E)-geranyl diphosphate = sabinene + diphosphate. The catalysed reaction is (2E)-geranyl diphosphate = beta-myrcene + diphosphate. The protein operates within secondary metabolite biosynthesis; terpenoid biosynthesis. In terms of biological role, monoterpene synthase (TPS) involved in the biosynthesis of monoterpene natural products, components of the chemical defense arsenal. Catalyzes the conversion of (2E)-geranyl diphosphate (GPP) into sabinene, and, as minor products, myrcene. The polypeptide is Sabinene synthase 1, chloroplastic (Salvia pomifera (Apple sage)).